The primary structure comprises 181 residues: MTEEHVVLLDEQDKPSGTLEKYAAHTLNTPLHLAFSCWLFNEDGQLLVTRRSLSKKAWPGVWTNSVCGHPQQGETTEEAIIRRCRFELGVEITDLTPVYPHFSYRATDPNGIVENEVCPVFAARATSVLQVNSEEVMDYQWSEFKSVWKSLLATPWAFSPWMVMQASDEQARERLLNYCQR.

The Mn(2+) site is built by His25 and His32. Residues Pro30–Met164 form the Nudix hydrolase domain. Cys67 is a catalytic residue. Cys67 is a binding site for Mg(2+). His69 is a binding site for Mn(2+). Residue Glu87 coordinates Mg(2+). Glu114 and Glu116 together coordinate Mn(2+). The active site involves Glu116.

It belongs to the IPP isomerase type 1 family. As to quaternary structure, homodimer. The cofactor is Mg(2+). Mn(2+) is required as a cofactor.

Its subcellular location is the cytoplasm. It carries out the reaction isopentenyl diphosphate = dimethylallyl diphosphate. It functions in the pathway isoprenoid biosynthesis; dimethylallyl diphosphate biosynthesis; dimethylallyl diphosphate from isopentenyl diphosphate: step 1/1. Catalyzes the 1,3-allylic rearrangement of the homoallylic substrate isopentenyl (IPP) to its highly electrophilic allylic isomer, dimethylallyl diphosphate (DMAPP). The sequence is that of Isopentenyl-diphosphate Delta-isomerase from Salmonella choleraesuis (strain SC-B67).